We begin with the raw amino-acid sequence, 505 residues long: RNA-splicing ligase RtcB homolog (505 aa).

Mn(2+) contacts are provided by Asp-119, Cys-122, His-227, His-259, and His-353. A GMP-binding site is contributed by 226–230; that stretch reads NHYAE. Residues 353 to 354, 402 to 405, Ser-409, 428 to 431, and Lys-504 contribute to the GMP site; these read HN, GGSM, and HGAG. His-428 acts as the GMP-histidine intermediate in catalysis.

Belongs to the RtcB family. Catalytic component of the tRNA-splicing ligase complex. It depends on Mn(2+) as a cofactor.

It is found in the nucleus. The protein localises to the cytoplasm. It catalyses the reaction a 3'-end 3'-phospho-ribonucleotide-RNA + a 5'-end dephospho-ribonucleoside-RNA + GTP = a ribonucleotidyl-ribonucleotide-RNA + GMP + diphosphate. It carries out the reaction a 3'-end 2',3'-cyclophospho-ribonucleotide-RNA + a 5'-end dephospho-ribonucleoside-RNA + GTP + H2O = a ribonucleotidyl-ribonucleotide-RNA + GMP + diphosphate + H(+). Its function is as follows. Catalytic subunit of the tRNA-splicing ligase complex that acts by directly joining spliced tRNA halves to mature-sized tRNAs. Required for the ligation of mRNAs and specifically, regulates xbp-1 mRNA splicing during the endoplasmic reticulum stress-induced unfolded protein response. Has a neuroprotective role in the age-dependent degeneration of dopamine neurons, which is mediated by xbp-1. This is RNA-splicing ligase RtcB homolog from Caenorhabditis elegans.